We begin with the raw amino-acid sequence, 189 residues long: Large ribosomal subunit protein bL25 (189 aa).

Belongs to the bacterial ribosomal protein bL25 family. CTC subfamily. In terms of assembly, part of the 50S ribosomal subunit; part of the 5S rRNA/L5/L18/L25 subcomplex. Contacts the 5S rRNA. Binds to the 5S rRNA independently of L5 and L18.

This is one of the proteins that binds to the 5S RNA in the ribosome where it forms part of the central protuberance. The polypeptide is Large ribosomal subunit protein bL25 (Azobacteroides pseudotrichonymphae genomovar. CFP2).